The sequence spans 246 residues: Nodulin-25 (246 aa).

A signal peptide spans 1–24 (MVYSNTYMLLGLGVFVLLSSHVLA).

It localises to the symbiosome. Its subcellular location is the peribacteroid space. Its function is as follows. Involved in the development and function of nodules. It might participate in the biological process of symbiotic nitrogen fixation. The polypeptide is Nodulin-25 (NMS-25) (Medicago sativa (Alfalfa)).